Reading from the N-terminus, the 180-residue chain is 3-phenylpropionate/cinnamic acid dioxygenase subunit beta (180 aa).

This sequence belongs to the bacterial ring-hydroxylating dioxygenase beta subunit family. This dioxygenase system consists of four proteins: the two subunits of the hydroxylase component (HcaE and HcaF), a ferredoxin (HcaC) and a ferredoxin reductase (HcaD).

It catalyses the reaction 3-phenylpropanoate + NADH + O2 + H(+) = 3-(cis-5,6-dihydroxycyclohexa-1,3-dien-1-yl)propanoate + NAD(+). The catalysed reaction is (E)-cinnamate + NADH + O2 + H(+) = (2E)-3-(cis-5,6-dihydroxycyclohexa-1,3-dien-1-yl)prop-2-enoate + NAD(+). Its pathway is aromatic compound metabolism; 3-phenylpropanoate degradation. Its function is as follows. Part of the multicomponent 3-phenylpropionate dioxygenase. Converts 3-phenylpropionic acid (PP) and cinnamic acid (CI) into 3-phenylpropionate-dihydrodiol (PP-dihydrodiol) and cinnamic acid-dihydrodiol (CI-dihydrodiol), respectively. The polypeptide is 3-phenylpropionate/cinnamic acid dioxygenase subunit beta (Photorhabdus laumondii subsp. laumondii (strain DSM 15139 / CIP 105565 / TT01) (Photorhabdus luminescens subsp. laumondii)).